Consider the following 32-residue polypeptide: U3-cyrtautoxin-As1a (32 aa).

3 cysteine pairs are disulfide-bonded: C4–C19, C11–C24, and C18–C29.

This sequence belongs to the neurotoxin 14 (magi-1) family. To aptotoxin III. Expressed by the venom gland.

It is found in the secreted. Functionally, is both paralytic and lethal, when injected into lepidopteran larvae. Is a slower acting toxin, being lethal at 24 hours, but not paralytic at 1 hour post-injection. The protein is U3-cyrtautoxin-As1a of Apomastus schlingeri (Trap-door spider).